Here is a 487-residue protein sequence, read N- to C-terminus: Zinc finger and BTB domain-containing protein 32 (487 aa).

The region spanning 29 to 87 is the BTB domain; the sequence is CDTLITVGGQEFPAHSLVLAGVSQQLGRRGQWALGEGISPSTFAQLLNFVYGESVELQP. A compositionally biased stretch (basic and acidic residues) spans 113 to 166; that stretch reads RGDRAKKPDPGLKKHQEEPEKPSRNAERELGDPGEKQKPEQVSRTGGREQEMLH. Disordered stretches follow at residues 113 to 208 and 308 to 371; these read RGDR…ADGK and QNQL…ARSR. Residues 308–320 show a composition bias toward polar residues; sequence QNQLASSSPTPGS. Positions 357-369 are enriched in pro residues; the sequence is PPRPHPPPAPPAR. C2H2-type zinc fingers lie at residues 373–395, 401–423, and 428–450; these read YACS…YRVH, FSCS…LRTH, and YRXX…MRGH. The interval 468–487 is disordered; it reads SSSRPSRPSTSPCCPSSSTT.

The protein belongs to the krueppel C2H2-type zinc-finger protein family. In terms of assembly, homodimer (via PTB domain). Interacts with the N-terminal of FANCC. Interacts with ZBTB16. Interacts with GATA3.

The protein resides in the nucleus. DNA-binding protein that binds to the to a 5'-TGTACAGTGT-3' core sequence. May function as a transcriptional transactivator and transcriptional repressor. Probably exerts its repressor effect by preventing GATA3 from binding to DNA. May play a role in regulating the differentiation and activation of helper T-cells. The protein is Zinc finger and BTB domain-containing protein 32 (ZBTB32) of Pan troglodytes (Chimpanzee).